Consider the following 1063-residue polypeptide: JmjC domain-containing histone demethylation protein 1 (1063 aa).

Residues 86–266 form the JmjC domain; the sequence is LYNVLSLEYS…TQLRVYQVEN (181 aa). Threonine 160 contacts substrate. Residues histidine 163 and aspartate 165 each contribute to the Fe cation site. Substrate is bound at residue lysine 180. Residue histidine 234 coordinates Fe cation. A compositionally biased stretch (acidic residues) spans 379-389; that stretch reads GLEEEAEDEDV. Disordered stretches follow at residues 379–400, 554–750, and 776–1040; these read GLEEEAEDEDVKPETKKEAEER, ESDE…NPYN, and VELH…KRAK. Positions 390–400 are enriched in basic and acidic residues; that stretch reads KPETKKEAEER. Composition is skewed to acidic residues over residues 594–605 and 613–631; these read PEYDEDMEEYDP and ELEEEEEEEEGEEEEEEEY. Positions 636-646 are enriched in low complexity; the sequence is TRRSSTRGSAS. Composition is skewed to basic and acidic residues over residues 647–665, 674–712, 776–806, 813–835, and 892–902; these read TKEEPQEEKEEKEAAPKKE, EKSSKPEKDTTEAKLKKEKKKKEMERRLRDSELEAELRA, VELHIEKNLYKLEPKRDESESREPSMEHEDS, PYDRYSHYHTENSHFQEDQDSHR, and EPRRSNDRRTS. Over residues 926–937 the composition is skewed to low complexity; that stretch reads AEAASASSSRHS. Composition is skewed to polar residues over residues 950–963 and 973–982; these read LNSSRHSSTDTPMY and WLPNTSNVTR. Pro residues predominate over residues 1005–1016; that stretch reads PPFPRSITPPPV. Residues 1020-1030 are compositionally biased toward polar residues; the sequence is ELKSQSNGRKS. Residues 1031 to 1040 show a composition bias toward basic and acidic residues; sequence NYSEDGKRAK.

Belongs to the JHDM1 histone demethylase family. It depends on Fe(2+) as a cofactor.

The protein resides in the nucleus. The catalysed reaction is N(6),N(6)-dimethyl-L-lysyl(36)-[histone H3] + 2 2-oxoglutarate + 2 O2 = L-lysyl(36)-[histone H3] + 2 formaldehyde + 2 succinate + 2 CO2. Histone demethylase that specifically demethylates 'Lys-36' of histone H3, thereby playing a central role in histone code. The chain is JmjC domain-containing histone demethylation protein 1 (jhdm-1) from Caenorhabditis briggsae.